The sequence spans 91 residues: uncharacterized protein (91 aa).

Positions 1–25 (MLLQRIGIEHLRIWILLLLISLVPA) are cleaved as a signal peptide.

This is an uncharacterized protein from Caenorhabditis elegans.